The chain runs to 2476 residues: Non-reducing polyketide synthase pkdA (2476 aa).

The N-terminal acylcarrier protein transacylase domain (SAT) stretch occupies residues 22–230; that stretch reads PNLNDAYLQS…VISEARLATL (209 aa). Cys142 acts as the Nucleophile; for transacylase activity in catalysis. His261 serves as the catalytic Proton donor/acceptor; for transacylase activity. The Ketosynthase family 3 (KS3) domain occupies 388-805; sequence DESIAVVGMA…GSNASLVVTQ (418 aa). Active-site for beta-ketoacyl synthase activity residues include Cys554, His689, and His728. The segment at 919–1204 is malonyl-CoA:ACP transacylase (MAT); that stretch reads FGGQRSSFVG…GSGVTNLASR (286 aa). Residues 1290–1417 are N-terminal hotdog fold; sequence QKGLWTFVGY…GRITFQTPKQ (128 aa). The PKS/mFAS DH domain occupies 1290-1592; that stretch reads QKGLWTFVGY…FVEVSIAGMS (303 aa). The product template (PT) domain stretch occupies residues 1321-1590; that stretch reads YVSAHVIAQT…LHFVEVSIAG (270 aa). His1325 serves as the catalytic Proton acceptor; for dehydratase activity. A C-terminal hotdog fold region spans residues 1445–1592; the sequence is QTIQGSRNIY…FVEVSIAGMS (148 aa). Asp1501 (proton donor; for dehydratase activity) is an active-site residue. The interval 1626-1649 is disordered; sequence DVSKNEKDAKAPSKKKESTSKSPG. One can recognise a Carrier domain in the interval 1650–1724; sequence HDILARVRTL…SLVKCIGANM (75 aa). An O-(pantetheine 4'-phosphoryl)serine modification is found at Ser1684. The segment at 1727–1766 is disordered; the sequence is SDTSRTGDDSSDDLETASAESETSSGINNEDSHNIDRQQI. The segment covering 1742–1751 has biased composition (low complexity); that stretch reads TASAESETSS. A methyltransferase (CMeT) domain region spans residues 1881 to 2030; sequence ELLRQYPEHA…DCEKTPSSHL (150 aa). The interval 2094 to 2340 is NADPH-binding domain; it reads VTGATGSLGS…SWCPVDDVAA (247 aa).

Pantetheine 4'-phosphate is required as a cofactor.

It carries out the reaction propanoyl-CoA + 3 malonyl-CoA + AH2 + 2 S-adenosyl-L-methionine + H(+) = 2-ethyl-4,6-dihydroxy-3,5-dimethylbenzaldehyde + A + 2 S-adenosyl-L-homocysteine + 3 CO2 + 4 CoA + H2O. Its pathway is secondary metabolite biosynthesis. Non-reducing polyketide synthase that synthesizes 6-ethyl-2,4-dihydroxy-3,5-dimethylbenzaldehyde via condensation of one propanoyl-CoA starter unit with 3 malonyl-CoA units, as well as 2 methylation steps. The polypeptide is Non-reducing polyketide synthase pkdA (Emericella nidulans (strain FGSC A4 / ATCC 38163 / CBS 112.46 / NRRL 194 / M139) (Aspergillus nidulans)).